The primary structure comprises 127 residues: Ribonuclease VapC9 (127 aa).

The 114-residue stretch at 2 to 115 (IVVDASAALA…VTADLRLSDT (114 aa)) folds into the PINc domain. Mg(2+)-binding residues include Asp-5 and Asp-91.

It belongs to the PINc/VapC protein family. Mg(2+) serves as cofactor.

Its function is as follows. Toxic component of a type II toxin-antitoxin (TA) system. An RNase. The cognate antitoxin is VapB9. The protein is Ribonuclease VapC9 of Mycobacterium tuberculosis (strain CDC 1551 / Oshkosh).